A 348-amino-acid chain; its full sequence is Zinc finger protein 843 (348 aa).

The segment at 33 to 55 adopts a C2H2-type 1 zinc-finger fold; the sequence is CKCKACGRGFTQSASLLQHWRVH. The C2H2-type 2; degenerate zinc finger occupies 145–167; it reads FCCCSCGDSVNEKTSLSQRVLPH. Residues 184–195 are compositionally biased toward polar residues; it reads APSSVAPDSTSG. Disordered regions lie at residues 184 to 203 and 256 to 329; these read APSS…GSPG and ATQP…WRGA.

The protein is Zinc finger protein 843 (ZNF843) of Homo sapiens (Human).